The primary structure comprises 284 residues: Shikimate dehydrogenase (NADP(+)) (284 aa).

Residues 20 to 22 (SIS) and serine 67 contribute to the shikimate site. Lysine 71 functions as the Proton acceptor in the catalytic mechanism. 2 residues coordinate shikimate: asparagine 92 and aspartate 107. NADP(+)-binding positions include 129–133 (GAGGA) and valine 227. Tyrosine 229 is a binding site for shikimate. Glycine 250 contacts NADP(+).

The protein belongs to the shikimate dehydrogenase family. In terms of assembly, homodimer.

It carries out the reaction shikimate + NADP(+) = 3-dehydroshikimate + NADPH + H(+). It functions in the pathway metabolic intermediate biosynthesis; chorismate biosynthesis; chorismate from D-erythrose 4-phosphate and phosphoenolpyruvate: step 4/7. In terms of biological role, involved in the biosynthesis of the chorismate, which leads to the biosynthesis of aromatic amino acids. Catalyzes the reversible NADPH linked reduction of 3-dehydroshikimate (DHSA) to yield shikimate (SA). This is Shikimate dehydrogenase (NADP(+)) from Streptococcus sanguinis (strain SK36).